Reading from the N-terminus, the 237-residue chain is DCN1-like protein 5 (237 aa).

Residue serine 41 is modified to Phosphoserine. Residues 46–232 form the DCUN1 domain; it reads FSRKKCLAWF…LLDEFVEWQK (187 aa).

In terms of assembly, part of a complex that contains DCUN1D5, CUL1 and RBX1; this interaction is bridged by CUL1. Interacts (via the DCUN1 domain) with the unneddylated cullins: interacts with CUL1, CUL2, CUL3, CUL4A, CUL4B and CUL5; these interactions promote the cullin neddylation and the identity of the cullin dictates the affinity of the interaction. Interacts (via DCUN1 domain) with UBE2M (N-terminally acetylated form) and probably with UBE2F (N-terminally acetylated form). May also interact with regulators or subunits of cullin-RING ligases such as RBX1, RNF7, ELOB and DDB1; these interactions are bridged by cullins. Interacts with CAND1; this interaction is bridged by cullins and strongly inhibits the neddylation of cullins. These CAND-cullin-DCNL complexes can only be neddylated in the presence of a substrate adapter. In terms of processing, phosphorylation at Ser-41 is independent of cullin's interaction. Phosphorylated in response to both TICAM1 and MYD88 dependent Toll-like receptor (TLR) pathway activation. Phosphorylated in response to IL1B stimulation.

It is found in the nucleus. The protein localises to the cytoplasm. Its subcellular location is the cytoskeleton. The protein resides in the spindle. Contributes to the neddylation of all cullins by transferring NEDD8 from N-terminally acetylated NEDD8-conjugating E2s enzyme to different cullin C-terminal domain-RBX complexes which is necessary for the activation of cullin-RING E3 ubiquitin ligases (CRLs). May play a role in DNA damage response and may participate in cell proliferation and anchorage-independent cell growth. The chain is DCN1-like protein 5 from Rattus norvegicus (Rat).